Consider the following 419-residue polypeptide: Enolase (419 aa).

Gln-160 provides a ligand contact to (2R)-2-phosphoglycerate. Glu-204 (proton donor) is an active-site residue. Residues Asp-240, Glu-283, and Asp-309 each coordinate Mg(2+). Residues Lys-334, Arg-363, Ser-364, and Lys-385 each contribute to the (2R)-2-phosphoglycerate site. Lys-334 functions as the Proton acceptor in the catalytic mechanism.

The protein belongs to the enolase family. It depends on Mg(2+) as a cofactor.

Its subcellular location is the cytoplasm. It is found in the secreted. The protein resides in the cell surface. It catalyses the reaction (2R)-2-phosphoglycerate = phosphoenolpyruvate + H2O. It functions in the pathway carbohydrate degradation; glycolysis; pyruvate from D-glyceraldehyde 3-phosphate: step 4/5. Its function is as follows. Catalyzes the reversible conversion of 2-phosphoglycerate (2-PG) into phosphoenolpyruvate (PEP). It is essential for the degradation of carbohydrates via glycolysis. This Pyrobaculum aerophilum (strain ATCC 51768 / DSM 7523 / JCM 9630 / CIP 104966 / NBRC 100827 / IM2) protein is Enolase.